Consider the following 501-residue polypeptide: NAD(P)H-quinone oxidoreductase chain 4, chloroplastic (501 aa).

14 helical membrane-spanning segments follow: residues 4 to 24 (FPWL…ILFL), 35 to 55 (YTIC…CYHF), 84 to 104 (GLSI…TLAA), 111 to 129 (SRLL…IGSF), 134 to 154 (LLLF…LLSM), 168 to 188 (FILY…GMDL), 209 to 229 (ALEI…SPII), 243 to 263 (HYST…YGLI), 273 to 293 (AHSI…IYAA), 306 to 326 (IAYS…SITD), 331 to 351 (GAIL…FLAG), 387 to 407 (LALP…GIIT), 417 to 437 (ILIT…SLSM), and 463 to 483 (LFVS…PDFV).

Belongs to the complex I subunit 4 family.

The protein resides in the plastid. Its subcellular location is the chloroplast thylakoid membrane. It carries out the reaction a plastoquinone + NADH + (n+1) H(+)(in) = a plastoquinol + NAD(+) + n H(+)(out). It catalyses the reaction a plastoquinone + NADPH + (n+1) H(+)(in) = a plastoquinol + NADP(+) + n H(+)(out). The protein is NAD(P)H-quinone oxidoreductase chain 4, chloroplastic of Buxus microphylla (Littleleaf boxwood).